Here is a 300-residue protein sequence, read N- to C-terminus: Ribonuclease Z (300 aa).

Zn(2+)-binding residues include His63, His65, Asp67, His68, His140, Asp207, and His265. Asp67 serves as the catalytic Proton acceptor.

It belongs to the RNase Z family. As to quaternary structure, homodimer. It depends on Zn(2+) as a cofactor.

The enzyme catalyses Endonucleolytic cleavage of RNA, removing extra 3' nucleotides from tRNA precursor, generating 3' termini of tRNAs. A 3'-hydroxy group is left at the tRNA terminus and a 5'-phosphoryl group is left at the trailer molecule.. In terms of biological role, zinc phosphodiesterase, which displays some tRNA 3'-processing endonuclease activity. Probably involved in tRNA maturation, by removing a 3'-trailer from precursor tRNA. The polypeptide is Ribonuclease Z (Ignicoccus hospitalis (strain KIN4/I / DSM 18386 / JCM 14125)).